We begin with the raw amino-acid sequence, 222 residues long: Translation initiation factor 6 (222 aa).

It belongs to the eIF-6 family.

Binds to the 50S ribosomal subunit and prevents its association with the 30S ribosomal subunit to form the 70S initiation complex. This is Translation initiation factor 6 from Methanocorpusculum labreanum (strain ATCC 43576 / DSM 4855 / Z).